The following is a 240-amino-acid chain: Transcriptional regulatory protein ResD (240 aa).

Residues 8-121 (KILVVDDEAR…EVVLRVKALL (114 aa)) form the Response regulatory domain. Aspartate 57 carries the 4-aspartylphosphate modification. Positions 137–237 (KNVLVFSHLS…VWGVGYKFEV (101 aa)) form a DNA-binding region, ompR/PhoB-type.

Interacts with the RNA polymerase core. Phosphorylated by ResE.

Its subcellular location is the cytoplasm. Its function is as follows. Member of the two-component regulatory system ResD/ResE. Required for the expression of resA, ctaA, qcrABC and fnr; activation role in global regulation of aerobic and anaerobic respiration. This is Transcriptional regulatory protein ResD (resD) from Bacillus subtilis (strain 168).